A 598-amino-acid chain; its full sequence is Aspartate--tRNA(Asp/Asn) ligase (598 aa).

L-aspartate is bound at residue glutamate 172. The aspartate stretch occupies residues 196–199 (QLFK). Arginine 218 is a binding site for L-aspartate. ATP is bound by residues 218–220 (RDE) and glutamine 227. Position 454 (histidine 454) interacts with L-aspartate. Glutamate 488 provides a ligand contact to ATP. Arginine 495 contacts L-aspartate. 540–543 (GLDR) contacts ATP.

It belongs to the class-II aminoacyl-tRNA synthetase family. Type 1 subfamily. Homodimer.

Its subcellular location is the cytoplasm. The catalysed reaction is tRNA(Asx) + L-aspartate + ATP = L-aspartyl-tRNA(Asx) + AMP + diphosphate. In terms of biological role, aspartyl-tRNA synthetase with relaxed tRNA specificity since it is able to aspartylate not only its cognate tRNA(Asp) but also tRNA(Asn). Reaction proceeds in two steps: L-aspartate is first activated by ATP to form Asp-AMP and then transferred to the acceptor end of tRNA(Asp/Asn). This is Aspartate--tRNA(Asp/Asn) ligase from Leptothrix cholodnii (strain ATCC 51168 / LMG 8142 / SP-6) (Leptothrix discophora (strain SP-6)).